The following is a 409-amino-acid chain: Nucleoprotein (409 aa).

Disordered regions lie at residues 1–32, 44–69, 121–194, and 238–259; these read MASG…SSGN, LNSP…QQHG, ADVK…GSED, and VDQV…DKMN. The RNA-binding stretch occupies residues 29-160; it reads SSGNASWFQA…GNFRWDFIPL (132 aa). In terms of domain architecture, CoV N NTD spans 31–156; sequence GNASWFQAIK…GGPDGNFRWD (126 aa). Residues 162–179 show a composition bias toward low complexity; sequence RGRSGRSTAASSAASSRP. Basic and acidic residues-rich tracts occupy residues 180–192 and 247–259; these read PSRE…RSGS and KGKE…DKMN. Residues Ser190 and Ser192 each carry the phosphoserine; by host modification. The CoV N CTD domain maps to 215–331; sequence TKAKADEMAH…QCVDGVGTRP (117 aa). The segment at 226–333 is dimerization; that stretch reads RYCKRTIPPG…VDGVGTRPKD (108 aa). Cys320 and Cys323 are joined by a disulfide. Residues 326–409 are disordered; sequence GVGTRPKDDE…GDSALGENEL (84 aa). The segment covering 341–356 has biased composition (low complexity); the sequence is RSSSRPATRTSSPAPR. Basic residues predominate over residues 358–367; it reads QRLKKEKRPK. The segment covering 368–384 has biased composition (basic and acidic residues); that stretch reads KQDDEVDKALTSDEERN. The residue at position 378 (Thr378) is a Phosphothreonine; by host. Ser379 carries the phosphoserine; by host modification.

Belongs to the gammacoronavirus nucleocapsid protein family. Homooligomer. Both monomeric and oligomeric forms interact with RNA. Interacts with protein M. Interacts with NSP3; this interaction serves to tether the genome to the newly translated replicase-transcriptase complex at a very early stage of infection. ADP-ribosylated. The ADP-ribosylation is retained in the virion during infection. Post-translationally, phosphorylated on serine and threonine residues.

Its subcellular location is the virion. It is found in the host endoplasmic reticulum-Golgi intermediate compartment. The protein localises to the host Golgi apparatus. Functionally, packages the positive strand viral genome RNA into a helical ribonucleocapsid (RNP) and plays a fundamental role during virion assembly through its interactions with the viral genome and membrane protein M. Plays an important role in enhancing the efficiency of subgenomic viral RNA transcription as well as viral replication. The polypeptide is Nucleoprotein (Gallus gallus (Chicken)).